We begin with the raw amino-acid sequence, 275 residues long: NH(3)-dependent NAD(+) synthetase (275 aa).

47 to 54 (GISGGQDS) contacts ATP. Residue D53 coordinates Mg(2+). R141 contributes to the deamido-NAD(+) binding site. T161 provides a ligand contact to ATP. Position 166 (E166) interacts with Mg(2+). 2 residues coordinate deamido-NAD(+): K174 and D181. Positions 190 and 212 each coordinate ATP. 261-262 (HK) serves as a coordination point for deamido-NAD(+).

Belongs to the NAD synthetase family. As to quaternary structure, homodimer.

It carries out the reaction deamido-NAD(+) + NH4(+) + ATP = AMP + diphosphate + NAD(+) + H(+). It participates in cofactor biosynthesis; NAD(+) biosynthesis; NAD(+) from deamido-NAD(+) (ammonia route): step 1/1. Catalyzes the ATP-dependent amidation of deamido-NAD to form NAD. Uses ammonia as a nitrogen source. The chain is NH(3)-dependent NAD(+) synthetase from Lacticaseibacillus paracasei (strain ATCC 334 / BCRC 17002 / CCUG 31169 / CIP 107868 / KCTC 3260 / NRRL B-441) (Lactobacillus paracasei).